We begin with the raw amino-acid sequence, 409 residues long: Argininosuccinate synthase (409 aa).

ATP contacts are provided by residues 10-18 and A37; that span reads AYSGGLDTS. Residues Y90 and S95 each contribute to the L-citrulline site. Residue G120 coordinates ATP. L-aspartate is bound by residues T122, N126, and D127. N126 provides a ligand contact to L-citrulline. L-citrulline-binding residues include R130, S182, S191, E267, and Y279.

The protein belongs to the argininosuccinate synthase family. Type 1 subfamily. As to quaternary structure, homotetramer.

It is found in the cytoplasm. The catalysed reaction is L-citrulline + L-aspartate + ATP = 2-(N(omega)-L-arginino)succinate + AMP + diphosphate + H(+). Its pathway is amino-acid biosynthesis; L-arginine biosynthesis; L-arginine from L-ornithine and carbamoyl phosphate: step 2/3. The polypeptide is Argininosuccinate synthase (Azoarcus sp. (strain BH72)).